The sequence spans 551 residues: Eukaryotic translation initiation factor 3 subunit D-2 (551 aa).

Residues Asn105 to Arg152 form a disordered region. A compositionally biased stretch (gly residues) spans Ala119 to Ala128. The segment at Gln290–Pro304 is RNA gate.

The protein belongs to the eIF-3 subunit D family. As to quaternary structure, component of the eukaryotic translation initiation factor 3 (eIF-3) complex. The eIF-3 complex interacts with pix.

Its subcellular location is the cytoplasm. Functionally, mRNA cap-binding component of the eukaryotic translation initiation factor 3 (eIF-3) complex, which is involved in protein synthesis of a specialized repertoire of mRNAs and, together with other initiation factors, stimulates binding of mRNA and methionyl-tRNAi to the 40S ribosome. The eIF-3 complex specifically targets and initiates translation of a subset of mRNAs involved in cell proliferation. In the eIF-3 complex, eif3d specifically recognizes and binds the 7-methylguanosine cap of a subset of mRNAs. This chain is Eukaryotic translation initiation factor 3 subunit D-2, found in Drosophila erecta (Fruit fly).